Consider the following 153-residue polypeptide: Arginine repressor (153 aa).

This sequence belongs to the ArgR family.

It localises to the cytoplasm. Its pathway is amino-acid biosynthesis; L-arginine biosynthesis [regulation]. Its function is as follows. Regulates arginine biosynthesis genes. The protein is Arginine repressor of Actinobacillus pleuropneumoniae serotype 5b (strain L20).